The following is a 207-amino-acid chain: 2,3-bisphosphoglycerate-dependent phosphoglycerate mutase (207 aa).

Residues 10 to 17 (RHGQSEWN), 23 to 24 (TG), R62, 89 to 92 (ERDY), K100, 116 to 117 (RR), and 160 to 161 (GN) contribute to the substrate site. The active-site Tele-phosphohistidine intermediate is H11. The active-site Proton donor/acceptor is E89.

Belongs to the phosphoglycerate mutase family. BPG-dependent PGAM subfamily. As to quaternary structure, homodimer.

The enzyme catalyses (2R)-2-phosphoglycerate = (2R)-3-phosphoglycerate. Its pathway is carbohydrate degradation; glycolysis; pyruvate from D-glyceraldehyde 3-phosphate: step 3/5. Functionally, catalyzes the interconversion of 2-phosphoglycerate and 3-phosphoglycerate. The sequence is that of 2,3-bisphosphoglycerate-dependent phosphoglycerate mutase from Afipia carboxidovorans (strain ATCC 49405 / DSM 1227 / KCTC 32145 / OM5) (Oligotropha carboxidovorans).